Consider the following 435-residue polypeptide: Transmembrane protein 130 (435 aa).

The N-terminal stretch at 1–24 (MAQAVWSRLGRILWLACLLPWAPA) is a signal peptide. Over 25 to 339 (GVAAGLYELN…IQVWPSRIQP (315 aa)) the chain is Extracellular. N-linked (GlcNAc...) asparagine glycosylation is found at N34, N197, and N300. A PKD domain is found at 147-233 (WPSSYLTKTV…AVKQKTGDFS (87 aa)). The chain crosses the membrane as a helical span at residues 340–360 (AVFAFPCATLITVMLAFIMYM). The Cytoplasmic segment spans residues 361-435 (TLRNATQQKD…LYKSVKTYTV (75 aa)).

The protein resides in the golgi apparatus membrane. The polypeptide is Transmembrane protein 130 (TMEM130) (Homo sapiens (Human)).